A 533-amino-acid polypeptide reads, in one-letter code: Amidophosphoribosyltransferase (533 aa).

C2 serves as the catalytic Nucleophile. The region spanning 2 to 238 (CGILALMLAD…PGECVFIRRS (237 aa)) is the Glutamine amidotransferase type-2 domain. Mg(2+)-binding residues include D383 and D384. S506 is subject to Phosphoserine.

This sequence in the C-terminal section; belongs to the purine/pyrimidine phosphoribosyltransferase family. Requires Mg(2+) as cofactor.

It catalyses the reaction 5-phospho-beta-D-ribosylamine + L-glutamate + diphosphate = 5-phospho-alpha-D-ribose 1-diphosphate + L-glutamine + H2O. It functions in the pathway purine metabolism; IMP biosynthesis via de novo pathway; N(1)-(5-phospho-D-ribosyl)glycinamide from 5-phospho-alpha-D-ribose 1-diphosphate: step 1/2. The polypeptide is Amidophosphoribosyltransferase (ade4) (Schizosaccharomyces pombe (strain 972 / ATCC 24843) (Fission yeast)).